A 262-amino-acid chain; its full sequence is Protein CUSTOS (262 aa).

Disordered regions lie at residues 1 to 79 and 126 to 262; these read MAAP…LQTT and FTSV…IPAN. Over residues 9–18 the composition is skewed to low complexity; the sequence is SDSESSNSSS. Polar residues predominate over residues 51–61; the sequence is ANSQLSTSQPS. Ser-61 bears the Phosphoserine mark. Thr-79 carries the post-translational modification Phosphothreonine. Ser-138 carries the post-translational modification Phosphoserine. Thr-182 carries the phosphothreonine modification. Basic residues predominate over residues 188–199; it reads KKKRKLKKKAKK. A compositionally biased stretch (low complexity) spans 200–209; the sequence is VASVDSAVAA. Polar residues predominate over residues 210 to 221; the sequence is TTPTSMATVQKQ. Thr-211 carries the post-translational modification Phosphothreonine. The Nucleolar localization signal (NLS) motif lies at 236–241; the sequence is KKKKKA.

This sequence belongs to the CUSTOS family.

The protein localises to the nucleus envelope. In terms of biological role, plays a role in the regulation of Wnt signaling pathway during early development. The protein is Protein CUSTOS of Homo sapiens (Human).